We begin with the raw amino-acid sequence, 1106 residues long: Protein kinase C (1106 aa).

An REM-1 1 domain is found at 1-67 (MDGDDLIASV…MRELQLRQMK (67 aa)). The tract at residues 65-138 (QMKQEGASPT…PRPFAPVPKA (74 aa)) is disordered. Over residues 79 to 93 (PPNPDGSAPVPPPKD) the composition is skewed to pro residues. In terms of domain architecture, REM-1 2 spans 149 to 226 (KYDTPYLGPK…LKRYEDLHVD (78 aa)). The 119-residue stretch at 232-350 (APDDESLSTP…MRRKKIESEF (119 aa)) folds into the C2 domain. Over residues 361–370 (MEHGAAHGRQ) the composition is skewed to basic and acidic residues. A disordered region spans residues 361-400 (MEHGAAHGRQDAGGAPGSSNRPPSGGHSGGPGQGYAGGAP). A compositionally biased stretch (gly residues) spans 386 to 400 (GHSGGPGQGYAGGAP). 2 Phorbol-ester/DAG-type zinc fingers span residues 460 to 508 (GHKF…VTKC) and 528 to 578 (PHRF…PDFC). Polar residues-rich tracts occupy residues 600–609 (KSASVSSGLS) and 658–668 (YIPPQSPTAAQ). Disordered stretches follow at residues 600-625 (KSAS…PQDN) and 658-719 (YIPP…HAHY). A compositionally biased stretch (low complexity) spans 683–693 (AAAAAAAAAAA). In terms of domain architecture, Protein kinase spans 781 to 1040 (FNFLAVLGKG…AQEVMSHAFF (260 aa)). ATP is bound by residues 787–795 (LGKGNFGKV) and lysine 810. The active-site Proton acceptor is the aspartate 906. One can recognise an AGC-kinase C-terminal domain in the interval 1041–1106 (RNINWDDIYH…RGFSYTADFA (66 aa)). At threonine 1082 the chain carries Phosphothreonine. Serine 1100 carries the post-translational modification Phosphoserine. Tyrosine 1101 carries the post-translational modification Phosphotyrosine.

It belongs to the protein kinase superfamily. AGC Ser/Thr protein kinase family. PKC subfamily. In terms of assembly, interacts with hsp90.

The enzyme catalyses L-seryl-[protein] + ATP = O-phospho-L-seryl-[protein] + ADP + H(+). It carries out the reaction L-threonyl-[protein] + ATP = O-phospho-L-threonyl-[protein] + ADP + H(+). Functionally, protein kinase C; part of cell wall integrity (CWI) signaling pathway composed of pkcA, the bck1-mkk2-mpka MAPK cascade and the downstream rlmA transcription regulator. The CWI signaling pathway regulates cell wall integrity and pyomelanin formation. CWI also controls oxidative stress response, gliotoxin production, iron adaptation and asexual development. Finally, CWI is constitutively required for A.fumigatus to cope with the temperature increase found in the mammalian lung environment, during infection. Modulates the expression of fumiquinazoline cluster during conidiogenesis. This Aspergillus fumigatus (strain ATCC MYA-4609 / CBS 101355 / FGSC A1100 / Af293) (Neosartorya fumigata) protein is Protein kinase C.